The following is a 141-amino-acid chain: Nucleoside triphosphatase NudI (141 aa).

Positions 1–141 (MRQRTIVCPL…RHTLRLKGLL (141 aa)) constitute a Nudix hydrolase domain. The short motif at 38–59 (GGVEPGERIEEALRREIREELG) is the Nudix box element.

It belongs to the Nudix hydrolase family. NudI subfamily. As to quaternary structure, monomer. The cofactor is Mg(2+).

The catalysed reaction is a ribonucleoside 5'-triphosphate + H2O = a ribonucleoside 5'-phosphate + diphosphate + H(+). It catalyses the reaction a 2'-deoxyribonucleoside 5'-triphosphate + H2O = a 2'-deoxyribonucleoside 5'-phosphate + diphosphate + H(+). The enzyme catalyses dUTP + H2O = dUMP + diphosphate + H(+). It carries out the reaction dTTP + H2O = dTMP + diphosphate + H(+). The catalysed reaction is dCTP + H2O = dCMP + diphosphate + H(+). Functionally, catalyzes the hydrolysis of nucleoside triphosphates, with a preference for pyrimidine deoxynucleoside triphosphates (dUTP, dTTP and dCTP). The chain is Nucleoside triphosphatase NudI from Salmonella arizonae (strain ATCC BAA-731 / CDC346-86 / RSK2980).